The following is a 1452-amino-acid chain: Protein clueless (1452 aa).

2 disordered regions span residues 1–93 (MALE…SNGH) and 266–288 (KKTRPDSVDCTPPEYVTPGVSEP). The segment covering 8 to 24 (KNSNATATSDATATKAS) has biased composition (low complexity). Residues 42 to 59 (PIPNSNHQNSNQNLVNGN) show a composition bias toward polar residues. The segment covering 68-77 (AKKKGKKNRN) has biased composition (basic residues). The residue at position 272 (Ser272) is a Phosphoserine. Positions 426–668 (RAEDAFSSKL…RTFPPDVNFL (243 aa)) constitute a Clu domain. 3 disordered regions span residues 726-775 (KQSE…GDTK), 962-1013 (AVSS…SSVS), and 1414-1452 (ANNNGEAEDAVPKDVEEQKEAGTQLTNGEKAAATEATSS). A compositionally biased stretch (basic and acidic residues) spans 750 to 766 (GADKTDVKEEKNEENEK). The span at 970 to 985 (KKRGNGGKHNKHKSSK) shows a compositional bias: basic residues. Low complexity predominate over residues 990-1013 (QQQQQATGNQNGSSSGSSNGSSVS). Positions 1423-1433 (AVPKDVEEQKE) are enriched in basic and acidic residues.

It belongs to the CLU family.

Its subcellular location is the cytoplasm. In terms of biological role, mRNA-binding protein involved in proper cytoplasmic distribution of mitochondria. The chain is Protein clueless from Drosophila erecta (Fruit fly).